The following is a 214-amino-acid chain: MTLGLVGRKVGMTRVFDEQGVSVPVTVLDMSANRVTQVKSKDTDGYTAVQVTFGQKKANRVNKAEAGHFAKAGVEAGRGLIEFALTEEKLAELKAGDEITVSMFEVGQLVDVTGISKGKGFSGTIKRHNFGAQRTSHGNSRSHRVPGSIGMAQDPGRVFPGKRMAGQYGNTKATVQKLEVVRVDAERQLLLVKGAVPGAVNSDVVVRPSVKVGA.

A disordered region spans residues 131 to 155 (GAQRTSHGNSRSHRVPGSIGMAQDP). Residue glutamine 153 is modified to N5-methylglutamine.

The protein belongs to the universal ribosomal protein uL3 family. In terms of assembly, part of the 50S ribosomal subunit. Forms a cluster with proteins L14 and L19. In terms of processing, methylated by PrmB.

In terms of biological role, one of the primary rRNA binding proteins, it binds directly near the 3'-end of the 23S rRNA, where it nucleates assembly of the 50S subunit. The protein is Large ribosomal subunit protein uL3 of Neisseria meningitidis serogroup C (strain 053442).